A 969-amino-acid chain; its full sequence is Liprin-beta-1 (969 aa).

A Phosphoserine modification is found at Ser37. Residue Thr39 is modified to Phosphothreonine. Ser40 carries the post-translational modification Phosphoserine. A coiled-coil region spans residues 99–310 (GDVYQERLAR…CLSRYRKMQD (212 aa)). Residue Lys291 is modified to N6-acetyllysine. 3 disordered regions span residues 342-361 (DLER…RDLL), 381-407 (LLPP…FEEG), and 424-482 (GVST…RKAR). Low complexity predominate over residues 346 to 358 (STSSTPGMGSPSR). Phosphoserine is present on residues Ser403 and Ser435. Residues 426 to 438 (STSSLQKSSSLGN) show a composition bias toward low complexity. Basic and acidic residues predominate over residues 439–452 (LKKEASDGTDKAPT). Lys440 is covalently cross-linked (Glycyl lysine isopeptide (Lys-Gly) (interchain with G-Cter in SUMO2)). The residue at position 500 (Ser500) is a Phosphoserine. The span at 518-529 (AGTSRSKGSQGT) shows a compositional bias: polar residues. A disordered region spans residues 518-593 (AGTSRSKGSQ…PRLGWSRDLG (76 aa)). Phosphoserine is present on Ser538. Residues 543–557 (KKSRGIMRLFGKLRR) are compositionally biased toward basic residues. Residues Ser560 and Ser595 each carry the phosphoserine modification. 2 SAM domains span residues 606–670 (WTKE…LGSE) and 678–741 (LDFN…LRIN). Residues Ser753 and Ser757 each carry the phosphoserine modification. The 73-residue stretch at 763–835 (VQQWTNHRVM…ATHFNLLIGA (73 aa)) folds into the SAM 3 domain. 3 positions are modified to phosphoserine: Ser957, Ser959, and Ser961. The residue at position 963 (Thr963) is a Phosphothreonine.

The protein belongs to the liprin family. Liprin-beta subfamily. Forms homodimers and heterodimers. Interacts with S100A4 in a Ca(2+)-dependent mode. Part of a cortical microtubule stabilization complex (CMSC) composed of KANK1, PPFIA1, PPFIBP1, ERC1/ELKS, PHLDB2/LL5beta, CLASPs, KIF21A and possibly additional interactors; within CMSCs KANK1 and PHLDB2/LL5beta seem to be the core components for recruiting microtubule-binding proteins KIF21A and CLASPs, whereas PPFIA1, PPFIBP1 and ERC1/ELKS serve as scaffolds for protein clustering. Interacts with KANK1 (via CC1 domain, residues 244-339).

The protein resides in the cytoplasm. It localises to the cell cortex. Functionally, may regulate the disassembly of focal adhesions. Did not bind receptor-like tyrosine phosphatases type 2A. The chain is Liprin-beta-1 (Ppfibp1) from Mus musculus (Mouse).